Consider the following 254-residue polypeptide: Decaprenylphosphoryl-2-keto-beta-D-erythro-pentose reductase (254 aa).

Asp-67 provides a ligand contact to NAD(+). Residue Tyr-160 is the Proton acceptor of the active site. Lys-164 provides a ligand contact to NAD(+).

The protein belongs to the short-chain dehydrogenases/reductases (SDR) family. As to quaternary structure, interacts with DprE1 to form an epimerase complex.

The protein resides in the periplasm. The enzyme catalyses trans,octa-cis-decaprenylphospho-beta-D-arabinofuranose + NAD(+) = trans,octa-cis-decaprenylphospho-beta-D-erythro-pentofuranosid-2-ulose + NADH + H(+). The protein operates within cell wall biogenesis; cell wall polysaccharide biosynthesis. In terms of biological role, component of the DprE1-DprE2 complex that catalyzes the 2-step epimerization of decaprenyl-phospho-ribose (DPR) to decaprenyl-phospho-arabinose (DPA), a key precursor that serves as the arabinose donor required for the synthesis of cell-wall arabinans. DprE1 catalyzes the first step of epimerization, namely FAD-dependent oxidation of the C2' hydroxyl of DPR to yield the keto intermediate decaprenyl-phospho-2'-keto-D-arabinose (DPX). The intermediate DPX is then transferred to DprE2 subunit of the epimerase complex, most probably through a 'substrate channel' at the interface of DprE1-DprE2 complex. DprE2 then catalyzes the second step of epimerization, the NAD(+)-dependent reduction of DPX that leads to the formation of DPA. The polypeptide is Decaprenylphosphoryl-2-keto-beta-D-erythro-pentose reductase (Mycolicibacterium smegmatis (strain ATCC 700084 / mc(2)155) (Mycobacterium smegmatis)).